The following is a 344-amino-acid chain: Phenylalanine--tRNA ligase alpha subunit (344 aa).

Mg(2+) is bound at residue E256.

It belongs to the class-II aminoacyl-tRNA synthetase family. Phe-tRNA synthetase alpha subunit type 1 subfamily. Tetramer of two alpha and two beta subunits. Requires Mg(2+) as cofactor.

The protein localises to the cytoplasm. The enzyme catalyses tRNA(Phe) + L-phenylalanine + ATP = L-phenylalanyl-tRNA(Phe) + AMP + diphosphate + H(+). This is Phenylalanine--tRNA ligase alpha subunit from Geobacillus kaustophilus (strain HTA426).